The chain runs to 459 residues: Cysteine--tRNA ligase (459 aa).

Cys28 is a binding site for Zn(2+). Positions 30–40 (VTIYDLCHIGH) match the 'HIGH' region motif. 3 residues coordinate Zn(2+): Cys209, His234, and Glu238. Positions 266-270 (KMSKS) match the 'KMSKS' region motif. ATP is bound at residue Lys269.

Belongs to the class-I aminoacyl-tRNA synthetase family. As to quaternary structure, monomer. Zn(2+) is required as a cofactor.

The protein localises to the cytoplasm. It carries out the reaction tRNA(Cys) + L-cysteine + ATP = L-cysteinyl-tRNA(Cys) + AMP + diphosphate. The polypeptide is Cysteine--tRNA ligase (Vibrio cholerae serotype O1 (strain ATCC 39541 / Classical Ogawa 395 / O395)).